The primary structure comprises 270 residues: Palmitoyltransferase ZDHHC12-A (270 aa).

Residues 1-8 (MNKSLFKS) are Cytoplasmic-facing. A helical membrane pass occupies residues 9 to 29 (GCLVRTAHVILTWIITLILFL). Residues 30–45 (HNTDLRRCQERGDLLQ) lie on the Lumenal side of the membrane. The helical transmembrane segment at 46–66 (PLVFSSVLLLSVLLYFTVSLM) threads the bilayer. Residues 67–145 (DPGFVLSDSQ…DNCVGELNHR (79 aa)) are Cytoplasmic-facing. In terms of domain architecture, DHHC spans 102–152 (RRCGYCFLLQPMRARHCKWCKRCVRRFDHHCPWIDNCVGELNHRWFLLYLC). The active-site S-palmitoyl cysteine intermediate is C132. A helical transmembrane segment spans residues 146 to 166 (WFLLYLCVQFTAVCWGLQSAW). Residues 167–182 (SGFISAPSWQQWFTQN) lie on the Lumenal side of the membrane. The helical transmembrane segment at 183-203 (VFLLVAFAVTAVFSVVLLLLL) threads the bilayer. Topologically, residues 204 to 270 (CIHAYLASVN…MYIRHNNASV (67 aa)) are cytoplasmic.

Belongs to the DHHC palmitoyltransferase family.

Its subcellular location is the golgi apparatus membrane. It is found in the endoplasmic reticulum membrane. The catalysed reaction is L-cysteinyl-[protein] + hexadecanoyl-CoA = S-hexadecanoyl-L-cysteinyl-[protein] + CoA. Functionally, palmitoyltransferase that catalyzes the addition of palmitate onto various protein substrates. Has a palmitoyltransferase activity toward gephyrin/GPHN, regulating its clustering at synapses and its function in gamma-aminobutyric acid receptor clustering. Acts as an inhibitor of the NLRP3 inflammasome by mediating palmitoylation of NLRP3, thereby promoting NLRP3 degradation by the chaperone-mediated autophagy (CMA) process. This Danio rerio (Zebrafish) protein is Palmitoyltransferase ZDHHC12-A.